The primary structure comprises 414 residues: UPF0754 membrane protein tlr2287 (414 aa).

Helical transmembrane passes span 2–22 and 386–406; these read ADIS…IGYF and AIVR…AGVL.

The protein belongs to the UPF0754 family.

The protein resides in the cell inner membrane. The protein is UPF0754 membrane protein tlr2287 of Thermosynechococcus vestitus (strain NIES-2133 / IAM M-273 / BP-1).